The following is a 346-amino-acid chain: Phosphate acyltransferase (346 aa).

It belongs to the PlsX family. In terms of assembly, homodimer. Probably interacts with PlsY.

The protein localises to the cytoplasm. The enzyme catalyses a fatty acyl-[ACP] + phosphate = an acyl phosphate + holo-[ACP]. It participates in lipid metabolism; phospholipid metabolism. Its function is as follows. Catalyzes the reversible formation of acyl-phosphate (acyl-PO(4)) from acyl-[acyl-carrier-protein] (acyl-ACP). This enzyme utilizes acyl-ACP as fatty acyl donor, but not acyl-CoA. The chain is Phosphate acyltransferase from Geobacter sulfurreducens (strain ATCC 51573 / DSM 12127 / PCA).